A 466-amino-acid polypeptide reads, in one-letter code: Asparagine--tRNA ligase (466 aa).

It belongs to the class-II aminoacyl-tRNA synthetase family. Homodimer.

The protein resides in the cytoplasm. The enzyme catalyses tRNA(Asn) + L-asparagine + ATP = L-asparaginyl-tRNA(Asn) + AMP + diphosphate + H(+). The polypeptide is Asparagine--tRNA ligase (Wigglesworthia glossinidia brevipalpis).